A 355-amino-acid polypeptide reads, in one-letter code: Protein-glutamate methylesterase/protein-glutamine glutaminase (355 aa).

The Response regulatory domain maps to 7-123; that stretch reads AAVVVDDSQF…SVGIKQQQDE (117 aa). Position 57 is a 4-aspartylphosphate (Asp-57). The interval 139 to 159 is disordered; it reads TEAAAERTTSTATSTTTSRSA. Positions 161-355 constitute a CheB-type methylesterase domain; the sequence is EYVDKPTLVI…DGVLDTIMRE (195 aa). Active-site residues include Ser-173, His-200, and Asp-297.

The protein belongs to the CheB family. In terms of processing, phosphorylated by CheA. Phosphorylation of the N-terminal regulatory domain activates the methylesterase activity.

The protein localises to the cytoplasm. The enzyme catalyses [protein]-L-glutamate 5-O-methyl ester + H2O = L-glutamyl-[protein] + methanol + H(+). It catalyses the reaction L-glutaminyl-[protein] + H2O = L-glutamyl-[protein] + NH4(+). In terms of biological role, involved in chemotaxis. Part of a chemotaxis signal transduction system that modulates chemotaxis in response to various stimuli. Catalyzes the demethylation of specific methylglutamate residues introduced into the chemoreceptors (methyl-accepting chemotaxis proteins or MCP) by CheR. Also mediates the irreversible deamidation of specific glutamine residues to glutamic acid. The polypeptide is Protein-glutamate methylesterase/protein-glutamine glutaminase (Natronomonas pharaonis (strain ATCC 35678 / DSM 2160 / CIP 103997 / JCM 8858 / NBRC 14720 / NCIMB 2260 / Gabara) (Halobacterium pharaonis)).